We begin with the raw amino-acid sequence, 353 residues long: Photosystem II protein D1 (353 aa).

N-acetylthreonine is present on threonine 2. Threonine 2 bears the Phosphothreonine mark. Helical transmembrane passes span 29–46 (YIGW…TATS), 118–133 (HFLL…EWEL), and 142–156 (WIAV…AATA). Histidine 118 contributes to the chlorophyll a binding site. Position 126 (tyrosine 126) interacts with pheophytin a. 2 residues coordinate [CaMn4O5] cluster: aspartate 170 and glutamate 189. A helical transmembrane segment spans residues 197 to 218 (FHMLGVAGVFGGSLFSAMHGSL). Histidine 198 contributes to the chlorophyll a binding site. A quinone contacts are provided by residues histidine 215 and 264–265 (SF). Position 215 (histidine 215) interacts with Fe cation. Histidine 272 is a Fe cation binding site. A helical membrane pass occupies residues 274-288 (FLAAWPVVGIWFTAL). Residues histidine 332, glutamate 333, aspartate 342, and alanine 344 each contribute to the [CaMn4O5] cluster site. Positions 345-353 (AVEAPSING) are excised as a propeptide.

This sequence belongs to the reaction center PufL/M/PsbA/D family. As to quaternary structure, PSII is composed of 1 copy each of membrane proteins PsbA, PsbB, PsbC, PsbD, PsbE, PsbF, PsbH, PsbI, PsbJ, PsbK, PsbL, PsbM, PsbT, PsbX, PsbY, PsbZ, Psb30/Ycf12, at least 3 peripheral proteins of the oxygen-evolving complex and a large number of cofactors. It forms dimeric complexes. The cofactor is The D1/D2 heterodimer binds P680, chlorophylls that are the primary electron donor of PSII, and subsequent electron acceptors. It shares a non-heme iron and each subunit binds pheophytin, quinone, additional chlorophylls, carotenoids and lipids. D1 provides most of the ligands for the Mn4-Ca-O5 cluster of the oxygen-evolving complex (OEC). There is also a Cl(-1) ion associated with D1 and D2, which is required for oxygen evolution. The PSII complex binds additional chlorophylls, carotenoids and specific lipids.. In terms of processing, tyr-161 forms a radical intermediate that is referred to as redox-active TyrZ, YZ or Y-Z. C-terminally processed by CTPA; processing is essential to allow assembly of the oxygen-evolving complex and thus photosynthetic growth.

It localises to the plastid. The protein localises to the chloroplast thylakoid membrane. It catalyses the reaction 2 a plastoquinone + 4 hnu + 2 H2O = 2 a plastoquinol + O2. Photosystem II (PSII) is a light-driven water:plastoquinone oxidoreductase that uses light energy to abstract electrons from H(2)O, generating O(2) and a proton gradient subsequently used for ATP formation. It consists of a core antenna complex that captures photons, and an electron transfer chain that converts photonic excitation into a charge separation. The D1/D2 (PsbA/PsbD) reaction center heterodimer binds P680, the primary electron donor of PSII as well as several subsequent electron acceptors. This is Photosystem II protein D1 from Illicium oligandrum (Star anise).